We begin with the raw amino-acid sequence, 357 residues long: Ribosomal RNA large subunit methyltransferase M (357 aa).

Residues Ser-183, 216–219 (APGG), Asp-235, Asp-255, and Asp-271 contribute to the S-adenosyl-L-methionine site. Catalysis depends on Lys-300, which acts as the Proton acceptor.

The protein belongs to the class I-like SAM-binding methyltransferase superfamily. RNA methyltransferase RlmE family. RlmM subfamily. Monomer.

Its subcellular location is the cytoplasm. The catalysed reaction is cytidine(2498) in 23S rRNA + S-adenosyl-L-methionine = 2'-O-methylcytidine(2498) in 23S rRNA + S-adenosyl-L-homocysteine + H(+). Functionally, catalyzes the 2'-O-methylation at nucleotide C2498 in 23S rRNA. The chain is Ribosomal RNA large subunit methyltransferase M from Pseudomonas syringae pv. tomato (strain ATCC BAA-871 / DC3000).